A 482-amino-acid chain; its full sequence is MRWLWPLGVSLAVALAAGPERAPRGVWLQQGGHQPVAQEQPDRSRRGAEREDAKGLQQYVPEGWAEYPRPIRPAALQPTQPWVAASPSPDRARATGGSGQEPQGNVTGPPGQRPQVQNPLYPVTERSYGAYAVLLLALLLFAVGIVGSLAVMCIVWHSYYLKSAWNSVLASLALWDFLVLFFCLPVVTFHEITKQRLLGAVSCRAVPFVEVSSLGVTTFSLCALGIDRFHVATSTLPKARPIEPCPSILAKLAVIWVGSMTLAAPELLLWQLVREPSPAAGTVDTCIMKPSAHLPESLYSLVLTYQNARMWWSFGCYFCLPVLFTVTCQLVTWRVRGTPGRKPESRPGPQEPRGARPSSTVAGLAAVHALCALPENVCNVVAAYLSAALTRQTLELLGLVTQFSTFFKAALTPLLLLCVSRPLGRAFLDCCCCCCGEGCGEGCGGRAAPAGPRAKLHTELSASGYFHKPREAPPLLALGTPC.

The first 25 residues, 1–25, serve as a signal peptide directing secretion; that stretch reads MRWLWPLGVSLAVALAAGPERAPRG. Disordered regions lie at residues 25–56 and 78–119; these read GVWL…AKGL and PTQP…VQNP. At 26–134 the chain is on the extracellular side; the sequence is VWLQQGGHQP…ERSYGAYAVL (109 aa). The segment covering 40 to 54 has biased composition (basic and acidic residues); the sequence is QPDRSRRGAEREDAK. Asn-105 is a glycosylation site (N-linked (GlcNAc...) asparagine). Residues 135 to 155 traverse the membrane as a helical segment; sequence LLALLLFAVGIVGSLAVMCIV. The Cytoplasmic portion of the chain corresponds to 156 to 167; it reads WHSYYLKSAWNS. A helical membrane pass occupies residues 168 to 188; it reads VLASLALWDFLVLFFCLPVVT. Over 189–205 the chain is Extracellular; that stretch reads FHEITKQRLLGAVSCRA. Cys-203 and Cys-286 form a disulfide bridge. Residues 206 to 226 form a helical membrane-spanning segment; the sequence is VPFVEVSSLGVTTFSLCALGI. Residues 227-251 lie on the Cytoplasmic side of the membrane; it reads DRFHVATSTLPKARPIEPCPSILAK. A helical membrane pass occupies residues 252–272; that stretch reads LAVIWVGSMTLAAPELLLWQL. At 273–310 the chain is on the extracellular side; that stretch reads VREPSPAAGTVDTCIMKPSAHLPESLYSLVLTYQNARM. Residues 311-331 traverse the membrane as a helical segment; it reads WWSFGCYFCLPVLFTVTCQLV. The Cytoplasmic portion of the chain corresponds to 332–361; it reads TWRVRGTPGRKPESRPGPQEPRGARPSSTV. The segment at 338–358 is disordered; it reads TPGRKPESRPGPQEPRGARPS. A helical transmembrane segment spans residues 362–382; the sequence is AGLAAVHALCALPENVCNVVA. The Extracellular segment spans residues 383-398; the sequence is AYLSAALTRQTLELLG. The helical transmembrane segment at 399 to 419 threads the bilayer; sequence LVTQFSTFFKAALTPLLLLCV. At 420 to 482 the chain is on the cytoplasmic side; that stretch reads SRPLGRAFLD…PPLLALGTPC (63 aa). Position 480 is a phosphothreonine (Thr-480).

Belongs to the G-protein coupled receptor 1 family. Interacts with the PTCH1 receptor. Post-translationally, undergoes metalloprotease-mediated cleavage which reduces its constitutive activity. Ubiquitinated.

It is found in the cell membrane. It localises to the cell projection. The protein resides in the cilium membrane. Functionally, G-protein coupled receptor. Has been shown to bind the neuroprotective and glioprotective factor prosaposin (PSAP), leading to endocytosis followed by an ERK phosphorylation cascade. However, other studies have shown that prosaposin does not increase activity. It has been suggested that GPR37L1 is a constitutively active receptor which signals through the guanine nucleotide-binding protein G(s) subunit alpha. Participates in the regulation of postnatal cerebellar development by modulating the Shh pathway. Regulates baseline blood pressure in females and protects against cardiovascular stress in males. Mediates inhibition of astrocyte glutamate transporters and reduction in neuronal N-methyl-D-aspartate receptor activity. In Bos taurus (Bovine), this protein is G-protein coupled receptor 37-like 1 (GPR37L1).